A 213-amino-acid polypeptide reads, in one-letter code: Large ribosomal subunit protein uL3 (213 aa).

The tract at residues 124 to 151 (KRHGQSRGPMAHGSRYHRRPGSMGSIAP) is disordered.

This sequence belongs to the universal ribosomal protein uL3 family. In terms of assembly, part of the 50S ribosomal subunit. Forms a cluster with proteins L14 and L19.

Functionally, one of the primary rRNA binding proteins, it binds directly near the 3'-end of the 23S rRNA, where it nucleates assembly of the 50S subunit. The sequence is that of Large ribosomal subunit protein uL3 from Geobacillus kaustophilus (strain HTA426).